The primary structure comprises 261 residues: Precorrin-6A synthase [deacetylating] (261 aa).

The enzyme catalyses precorrin-5 + S-adenosyl-L-methionine + H2O = precorrin-6A + acetate + S-adenosyl-L-homocysteine + 2 H(+). Its pathway is cofactor biosynthesis; adenosylcobalamin biosynthesis; cob(II)yrinate a,c-diamide from precorrin-2 (aerobic route): step 5/10. Functionally, catalyzes the methylation of C-1 in precorrin-5 and the subsequent extrusion of acetic acid from the resulting intermediate to form cobalt-precorrin-6A. This chain is Precorrin-6A synthase [deacetylating] (cobF), found in Sinorhizobium sp.